The primary structure comprises 288 residues: Quinate/shikimate dehydrogenase (288 aa).

Substrate contacts are provided by Lys71 and Asp107. NAD(+)-binding positions include 132-135 (AGGA), 155-158 (NRRD), Lys205, 232-235 (CVYN), and Gly255.

It belongs to the shikimate dehydrogenase family. Homodimer.

The catalysed reaction is L-quinate + NAD(+) = 3-dehydroquinate + NADH + H(+). It catalyses the reaction L-quinate + NADP(+) = 3-dehydroquinate + NADPH + H(+). It carries out the reaction shikimate + NADP(+) = 3-dehydroshikimate + NADPH + H(+). The enzyme catalyses shikimate + NAD(+) = 3-dehydroshikimate + NADH + H(+). Its pathway is metabolic intermediate biosynthesis; chorismate biosynthesis; chorismate from D-erythrose 4-phosphate and phosphoenolpyruvate: step 4/7. Functionally, the actual biological function of YdiB remains unclear, nor is it known whether 3-dehydroshikimate or quinate represents the natural substrate. Catalyzes the reversible NAD-dependent reduction of both 3-dehydroshikimate (DHSA) and 3-dehydroquinate to yield shikimate (SA) and quinate, respectively. It can use both NAD or NADP for catalysis, however it has higher catalytic efficiency with NAD. In Escherichia coli O1:K1 / APEC, this protein is Quinate/shikimate dehydrogenase.